A 319-amino-acid chain; its full sequence is Glutathione synthetase (319 aa).

One can recognise an ATP-grasp domain in the interval 125-311; sequence KLFTAWFPEL…ITGMLMDAIE (187 aa). 151-207 provides a ligand contact to ATP; sequence HQEHGDIILKPLDGMGGTSIFRVKQDDPNLSVIIETLTELSSRFCMAQNFLPAIKEG. Residues glutamate 281 and asparagine 283 each coordinate Mg(2+).

This sequence belongs to the prokaryotic GSH synthase family. The cofactor is Mg(2+). Mn(2+) is required as a cofactor.

The catalysed reaction is gamma-L-glutamyl-L-cysteine + glycine + ATP = glutathione + ADP + phosphate + H(+). The protein operates within sulfur metabolism; glutathione biosynthesis; glutathione from L-cysteine and L-glutamate: step 2/2. This chain is Glutathione synthetase, found in Yersinia pestis.